The following is a 33-amino-acid chain: ATP synthase 27 kDa subunit, mitochondrial (33 aa).

It is found in the mitochondrion. Its subcellular location is the mitochondrion inner membrane. In terms of biological role, mitochondrial membrane ATP synthase (F(1)F(0) ATP synthase or Complex V) produces ATP from ADP in the presence of a proton gradient across the membrane which is generated by electron transport complexes of the respiratory chain. F-type ATPases consist of two structural domains, F(1) - containing the extramembraneous catalytic core and F(0) - containing the membrane proton channel, linked together by a central stalk and a peripheral stalk. During catalysis, ATP synthesis in the catalytic domain of F(1) is coupled via a rotary mechanism of the central stalk subunits to proton translocation. Part of the complex F(0) domain. This chain is ATP synthase 27 kDa subunit, mitochondrial, found in Solanum tuberosum (Potato).